Here is a 381-residue protein sequence, read N- to C-terminus: PqqA peptide cyclase (381 aa).

In terms of domain architecture, Radical SAM core spans 12-228 (VGPPLWLLAE…AEYRQRLAAE (217 aa)). Residues Cys26, Cys30, and Cys33 each contribute to the [4Fe-4S] cluster site.

Belongs to the radical SAM superfamily. PqqE family. Interacts with PqqD. The interaction is necessary for activity of PqqE. [4Fe-4S] cluster is required as a cofactor.

It carries out the reaction [PQQ precursor protein] + S-adenosyl-L-methionine = E-Y cross-linked-[PQQ precursor protein] + 5'-deoxyadenosine + L-methionine + H(+). The protein operates within cofactor biosynthesis; pyrroloquinoline quinone biosynthesis. Functionally, catalyzes the cross-linking of a glutamate residue and a tyrosine residue in the PqqA protein as part of the biosynthesis of pyrroloquinoline quinone (PQQ). The chain is PqqA peptide cyclase from Pseudomonas aeruginosa (strain LESB58).